The sequence spans 369 residues: Histidine decarboxylase (369 aa).

A substrate-binding site is contributed by His-119. Position 230 is an N6-(pyridoxal phosphate)lysine (Lys-230).

It belongs to the group II decarboxylase family. In terms of assembly, homotetramer. The cofactor is pyridoxal 5'-phosphate.

The catalysed reaction is L-histidine + H(+) = histamine + CO2. The chain is Histidine decarboxylase from Mesorhizobium japonicum (strain LMG 29417 / CECT 9101 / MAFF 303099) (Mesorhizobium loti (strain MAFF 303099)).